We begin with the raw amino-acid sequence, 549 residues long: Undecaprenyl phosphate-alpha-4-amino-4-deoxy-L-arabinose arabinosyl transferase (549 aa).

Transmembrane regions (helical) follow at residues 9 to 29 (LLLI…GLWI), 80 to 100 (LFGV…LAYL), 112 to 132 (SLAC…SGYA), 136 to 156 (PQFT…LDAG), 166 to 186 (ILLG…AWLL), 204 to 224 (LLGY…PWAL), 256 to 276 (PWWF…GLLP), 288 to 308 (QAPV…FSLS), 312 to 332 (LPTY…HALV), 346 to 366 (NGLL…YLQL), 376 to 396 (FELF…LAQW), and 402 to 422 (AWAA…AAMP).

It belongs to the glycosyltransferase 83 family.

Its subcellular location is the cell inner membrane. The enzyme catalyses 4-amino-4-deoxy-alpha-L-arabinopyranosyl di-trans,octa-cis-undecaprenyl phosphate + lipid IVA = lipid IIA + di-trans,octa-cis-undecaprenyl phosphate.. It functions in the pathway lipopolysaccharide metabolism; 4-amino-4-deoxy-beta-L-arabinose-lipid A biosynthesis. In terms of biological role, catalyzes the transfer of the L-Ara4N moiety of the glycolipid undecaprenyl phosphate-alpha-L-Ara4N to lipid A. The modified arabinose is attached to lipid A and is required for resistance to polymyxin and cationic antimicrobial peptides. This is Undecaprenyl phosphate-alpha-4-amino-4-deoxy-L-arabinose arabinosyl transferase from Pseudomonas aeruginosa (strain UCBPP-PA14).